The following is a 278-amino-acid chain: Rhomboid protease GlpG (278 aa).

6 helical membrane passes run 95 to 115 (GPLT…MQIL), 143 to 163 (AFLH…WYLG), 170 to 190 (LGSG…GWAQ), 192 to 212 (LFSG…MGYC), 224 to 241 (LMLP…LVAG), and 245 to 267 (ILGM…LMAF). The Nucleophile role is filled by Ser202. His255 is an active-site residue.

This sequence belongs to the peptidase S54 family.

It localises to the cell inner membrane. It catalyses the reaction Cleaves type-1 transmembrane domains using a catalytic dyad composed of serine and histidine that are contributed by different transmembrane domains.. In terms of biological role, rhomboid-type serine protease that catalyzes intramembrane proteolysis. The chain is Rhomboid protease GlpG from Serratia proteamaculans (strain 568).